The primary structure comprises 549 residues: Copalyl diphosphate synthase (549 aa).

Residues 321–326 (DADDTA) carry the DXDDTA motif motif. Positions 451–457 (QRDDGSW) match the QXXDGSW motif motif.

This sequence belongs to the terpene synthase family. Requires Mg(2+) as cofactor.

The catalysed reaction is (2E,6E,10E)-geranylgeranyl diphosphate = (+)-copalyl diphosphate. Functionally, involved in the biosynthesis of the labdane-type bicyclic diterpene labda-8(17),12(E),14-triene. Catalyzes the conversion of geranylgeranyl diphosphate (GGDP) into (+)-copalyl diphosphate. The protein is Copalyl diphosphate synthase of Streptomyces anulatus (Streptomyces chrysomallus).